A 139-amino-acid chain; its full sequence is Holo-[acyl-carrier-protein] synthase (139 aa).

2 residues coordinate Mg(2+): Asp8 and Glu57.

The protein belongs to the P-Pant transferase superfamily. AcpS family. Mg(2+) serves as cofactor.

It localises to the cytoplasm. The catalysed reaction is apo-[ACP] + CoA = holo-[ACP] + adenosine 3',5'-bisphosphate + H(+). Its function is as follows. Transfers the 4'-phosphopantetheine moiety from coenzyme A to a Ser of acyl-carrier-protein. The polypeptide is Holo-[acyl-carrier-protein] synthase (Sinorhizobium fredii (strain NBRC 101917 / NGR234)).